The primary structure comprises 183 residues: MKMLVGLGNPGKKYSHTRHNIGFKVLEELARRHQIEKEESRYDAIVGHLRINQEKLLLVKPLTFMNLSGKAVRPLFNWFKLELSELLVVYDDMDLPPGTVRIRASGGTGGHKGMQSICESLGSRDFPRIRIGIGRPPGGAIDWVLGEFSESEKPLMQDAIEKAASAIECWVKSGIDASMNAYN.

Tyr14 serves as a coordination point for tRNA. Catalysis depends on His19, which acts as the Proton acceptor. 2 residues coordinate tRNA: Phe64 and Asn66.

It belongs to the PTH family. As to quaternary structure, monomer.

Its subcellular location is the cytoplasm. The catalysed reaction is an N-acyl-L-alpha-aminoacyl-tRNA + H2O = an N-acyl-L-amino acid + a tRNA + H(+). Hydrolyzes ribosome-free peptidyl-tRNAs (with 1 or more amino acids incorporated), which drop off the ribosome during protein synthesis, or as a result of ribosome stalling. Its function is as follows. Catalyzes the release of premature peptidyl moieties from peptidyl-tRNA molecules trapped in stalled 50S ribosomal subunits, and thus maintains levels of free tRNAs and 50S ribosomes. The protein is Peptidyl-tRNA hydrolase of Syntrophomonas wolfei subsp. wolfei (strain DSM 2245B / Goettingen).